A 181-amino-acid polypeptide reads, in one-letter code: Probable toxin TacT (181 aa).

This sequence belongs to the acetyltransferase family. As to quaternary structure, forms a complex with cognate antitoxin TacA.

In terms of biological role, probable toxin component of a type II toxin-antitoxin (TA) system. Might acetylate tRNA and inhibit translation. Should be neutralized by cognate antitoxin TacA (y4aR). The protein is Probable toxin TacT of Sinorhizobium fredii (strain NBRC 101917 / NGR234).